We begin with the raw amino-acid sequence, 400 residues long: 3-hydroxybenzoate 6-hydroxylase (400 aa).

This sequence belongs to the 3-hydroxybenzoate 6-hydroxylase family. Monomer. Requires FAD as cofactor.

It catalyses the reaction 3-hydroxybenzoate + NADH + O2 + H(+) = 2,5-dihydroxybenzoate + NAD(+) + H2O. Its function is as follows. Catalyzes the NAD- or NADP-dependent conversion of 3-hydroxybenzoate to gentisate. The affinity of the enzyme toward NAD is twice as high as for NADP. The protein is 3-hydroxybenzoate 6-hydroxylase (nagX) of Polaromonas naphthalenivorans (strain CJ2).